The chain runs to 1185 residues: MSKRKLGHDGNSHELDEEEEEEEEDDDDELIHSTQDQDRPHKQQRVENGKQMTPTKQHQQQQQQQPISNGRLKKLKAQSSDEESGSSEDDDEDVEDVDSSGSDSGSSDDDDDDDDDDDDDDGNSEDEREAVRREQQLKSGVTEPEAGIIESITLENFMCHRHFKLDFCSNVNFIAGENGSGKSAVLIALIVCLGAKAGFTNRGSKLSDLVKAETNTAVITVKLRNQGQEAFKPEKYGKSVIIERRISRTGSSGYKVKDYNGKTVSDKFNDVSLILEQFNIQIDNPMSILTQDTSRQFLNSAGPQDKYKSFLMATQLDKMTKDYTTIREHIDKIKDMLSQKVVVIQELEKKVREYNKEYKDLQQMVGLERKISEFKNQLAWSFVVESEREAKRKEKQVAEAEERSFDNDIRKVDETIETYNKSIEDIKKDIKEFTDQIKIQEQKKETNNREILTIEREEAKIQTQIEANNKKRQQRKQRRHLQLQSINEIKERNAQLANNQSKLDEIKKKGQQKLQLEARKEELIKEKEDLMRDRENLKRDHQNQRTITQQMNREYEGLRVQLNNLRSTQKGENQAYGKGMTDFLHKIEASRRNFSKLPIGPIGLSLKIKNESWAFAIESAISKATLRNFLVFSIPDGITLQKLGHQFGIKVDYTKIPETTEVYKTVEHDELDPSLATVLRVLDSPSHFIINFLIDTKKVEQIGLGNDRKEIDSVLYTDRCPRGLSQFFDPQGNNYSKTKSGNPFYQAAKNSGEATMLRVNSDAAIQRTQRDMESKLPALNQQKKIEQELSSDVQAIEHKISQNDQDQNQCSRKILQITNEIKSIEDTLVQQTDDYSELEIGLASLDEEIKSMDEEINIQKAQRTEVAAQKGPFAENNRALDDQIDVLSNQLGNIENNLRKFNEGLRKLNNNKQALLQQQGRSAQERDQFKAEYQRILEIVKEKTDKATQICERIEIPTNETNTTLTNKIIQYTKQLEKESRGKRSRTEALKLFQDANNSLKEISEQRDNIEELATILERNLNERYKKWQRFRLSISRRSDQYFNIFLSKKGYTGSLTFDHQNGKLDINVELQKALPSNQNGTAKGDTKGLSGGERSFSTVSLLLAFWENMECPFRAMDEFDVFMDEVNRSISINLLMSKAEENRSKQYIFVTPLALNHIKTSEYVKVFRVRAPVRTGGDVTVETD.

A disordered region spans residues 1-144; the sequence is MSKRKLGHDG…QQLKSGVTEP (144 aa). Residues 15 to 29 are compositionally biased toward acidic residues; sequence LDEEEEEEEEDDDDE. Residues 35 to 48 are compositionally biased toward basic and acidic residues; it reads QDQDRPHKQQRVEN. 2 stretches are compositionally biased toward acidic residues: residues 80-98 and 106-128; these read SDEE…EDVD and SSDD…EDER. Position 176–183 (176–183) interacts with ATP; that stretch reads GENGSGKS. A coiled-coil region spans residues 337-570; sequence LSQKVVVIQE…QLNNLRSTQK (234 aa). The tract at residues 571 to 807 is flexible hinge; sequence GENQAYGKGM…HKISQNDQDQ (237 aa). A coiled-coil region spans residues 808-1024; it reads NQCSRKILQI…TILERNLNER (217 aa).

This sequence belongs to the SMC family. SMC6 subfamily. Forms a heterodimer with smc5.

It is found in the nucleus. The protein localises to the chromosome. Functionally, core component of the smc5-smc6 complex, a complex involved in DNA double-strand breaks by homologous recombination. The complex may promote sister chromatid homologous recombination by recruiting the smc1-smc3 cohesin complex to double-strand breaks. The protein is Structural maintenance of chromosomes protein 6 (smc6) of Dictyostelium discoideum (Social amoeba).